Reading from the N-terminus, the 306-residue chain is Ornithine carbamoyltransferase (306 aa).

Residues 46 to 49, Gln-73, Arg-97, and 124 to 127 each bind carbamoyl phosphate; these read STRT and HPTQ. L-ornithine-binding positions include Asn-156, Asp-220, and 224 to 225; that span reads SM. Carbamoyl phosphate contacts are provided by residues 260 to 261 and Arg-288; that span reads CL.

It belongs to the aspartate/ornithine carbamoyltransferase superfamily. OTCase family.

It localises to the cytoplasm. It catalyses the reaction carbamoyl phosphate + L-ornithine = L-citrulline + phosphate + H(+). It functions in the pathway amino-acid biosynthesis; L-arginine biosynthesis; L-arginine from L-ornithine and carbamoyl phosphate: step 1/3. Its function is as follows. Reversibly catalyzes the transfer of the carbamoyl group from carbamoyl phosphate (CP) to the N(epsilon) atom of ornithine (ORN) to produce L-citrulline. The chain is Ornithine carbamoyltransferase from Campylobacter jejuni (strain RM1221).